The primary structure comprises 379 residues: Cytochrome b (379 aa).

A run of 4 helical transmembrane segments spans residues 33 to 53, 77 to 98, 113 to 133, and 178 to 198; these read FGSL…FLAM, WLIR…FIHV, WNIG…GYVL, and FFAF…VHLL. Residues histidine 83 and histidine 97 each contribute to the heme b site. Residues histidine 182 and histidine 196 each coordinate heme b. Histidine 201 provides a ligand contact to a ubiquinone. A run of 4 helical transmembrane segments spans residues 226-246, 288-308, 320-340, and 347-367; these read IKDL…ALFF, LGGV…PLLN, ITQT…WIGG, and FTMX…ILMP.

It belongs to the cytochrome b family. The cytochrome bc1 complex contains 11 subunits: 3 respiratory subunits (MT-CYB, CYC1 and UQCRFS1), 2 core proteins (UQCRC1 and UQCRC2) and 6 low-molecular weight proteins (UQCRH/QCR6, UQCRB/QCR7, UQCRQ/QCR8, UQCR10/QCR9, UQCR11/QCR10 and a cleavage product of UQCRFS1). This cytochrome bc1 complex then forms a dimer. The cofactor is heme b.

The protein localises to the mitochondrion inner membrane. Component of the ubiquinol-cytochrome c reductase complex (complex III or cytochrome b-c1 complex) that is part of the mitochondrial respiratory chain. The b-c1 complex mediates electron transfer from ubiquinol to cytochrome c. Contributes to the generation of a proton gradient across the mitochondrial membrane that is then used for ATP synthesis. This Necromys amoenus (Pleasant bolo mouse) protein is Cytochrome b (MT-CYB).